A 431-amino-acid chain; its full sequence is Translation initiation factor 2 subunit gamma (431 aa).

Residues 26–223 (QPCVNIGMVG…ALETQIPTPS (198 aa)) form the tr-type G domain. A G1 region spans residues 35–42 (GHVDHGKT). The Mg(2+) site is built by Asp-38, Thr-42, Gly-63, and Ser-65. 38–43 (DHGKTT) contributes to the GTP binding site. Residues 63–67 (GISIR) are G2. Zn(2+) contacts are provided by Cys-78, Cys-81, Cys-93, and Cys-96. The G3 stretch occupies residues 110–113 (DAPG). GTP-binding positions include 166–169 (NKID) and 201–203 (SAQ). The tract at residues 166-169 (NKID) is G4. A G5 region spans residues 201–203 (SAQ).

The protein belongs to the TRAFAC class translation factor GTPase superfamily. Classic translation factor GTPase family. EIF2G subfamily. Heterotrimer composed of an alpha, a beta and a gamma chain. It depends on Mg(2+) as a cofactor.

The catalysed reaction is GTP + H2O = GDP + phosphate + H(+). Functionally, eIF-2 functions in the early steps of protein synthesis by forming a ternary complex with GTP and initiator tRNA. In Methanosarcina mazei (strain ATCC BAA-159 / DSM 3647 / Goe1 / Go1 / JCM 11833 / OCM 88) (Methanosarcina frisia), this protein is Translation initiation factor 2 subunit gamma.